Consider the following 82-residue polypeptide: Penaeidin-3a (82 aa).

The N-terminal stretch at 1 to 19 is a signal peptide; it reads MRLVVCLVFLASFALVCQG. Gln-20 is modified (pyrrolidone carboxylic acid). Intrachain disulfides connect Cys-51–Cys-66, Cys-55–Cys-73, and Cys-67–Cys-74. Residue Ser-81 is modified to Serine amide.

Post-translationally, the N-terminus forms pyrrolidone carboxylic acid. In terms of tissue distribution, higher expression in hemocytes and to a lesser extent in heart, testis, gills, intestine, lymphoid organ and hepatopancreas. Traces in eyes and subcuticular epithelium. Not present in the brain.

It is found in the cytoplasmic granule. In terms of biological role, antibacterial activity against M.luteus and E.coli bacteria. Antifungal activity against N.crassa and F.oxysporum. Presents chitin-binding activity. The polypeptide is Penaeidin-3a (Penaeus vannamei (Whiteleg shrimp)).